A 341-amino-acid chain; its full sequence is L-sulfolactate dehydrogenase (341 aa).

The protein belongs to the LDH2/MDH2 oxidoreductase family.

It is found in the cytoplasm. The catalysed reaction is a (2S)-2-hydroxycarboxylate + NAD(+) = a 2-oxocarboxylate + NADH + H(+). It participates in cofactor biosynthesis; coenzyme M biosynthesis; sulfoacetaldehyde from phosphoenolpyruvate and sulfite: step 3/4. Its pathway is cofactor biosynthesis; 5,6,7,8-tetrahydromethanopterin biosynthesis. Catalyzes the reduction of sulfopyruvate to (R)-sulfolactate. Involved in the biosynthesis of both coenzyme M (with (R)-sulfolactate) and methanopterin (with alpha-ketoglutarate). The polypeptide is L-sulfolactate dehydrogenase (comC) (Methanothermobacter thermautotrophicus (strain ATCC 29096 / DSM 1053 / JCM 10044 / NBRC 100330 / Delta H) (Methanobacterium thermoautotrophicum)).